The primary structure comprises 342 residues: Mitochondrial fission factor (342 aa).

Over 1–322 (MSKGTSSDTS…ENKERAKREM (322 aa)) the chain is Cytoplasmic. T115 is modified (phosphothreonine). A146 is modified (phosphoserine). R149 is modified (phosphothreonine). Residues K151, S155, S157, and S172 each carry the phosphoserine modification. Position 200 is a phosphothreonine (T200). 4 positions are modified to phosphoserine: S202, S229, S233, and S295. The stretch at 291–322 (VDAASLRRQIIKLNRRLQLLEEENKERAKREM) forms a coiled coil. Residues 323 to 340 (VMYSITVAFWLLNSWLWF) form a helical; Anchor for type IV membrane protein membrane-spanning segment. Residues 341-342 (RR) lie on the Mitochondrial intermembrane side of the membrane.

Belongs to the Tango11 family. As to quaternary structure, homodimer. Interacts with DNM1L. Interacts with C11orf65/MFI; the interaction inhibits MFF interaction with DNM1L. Highly expressed in heart, kidney, liver, brain, muscle, and stomach.

It localises to the mitochondrion outer membrane. Its subcellular location is the peroxisome. It is found in the cytoplasmic vesicle. The protein resides in the secretory vesicle. The protein localises to the synaptic vesicle. Functionally, plays a role in mitochondrial and peroxisomal fission. Promotes the recruitment and association of the fission mediator dynamin-related protein 1 (DNM1L) to the mitochondrial surface. May be involved in regulation of synaptic vesicle membrane dynamics by recruitment of DNM1L to clathrin-containing vesicles. The chain is Mitochondrial fission factor (MFF) from Homo sapiens (Human).